Here is a 324-residue protein sequence, read N- to C-terminus: IDS-like terpene synthase 1 (324 aa).

Aspartate 77 and aspartate 81 together coordinate Mg(2+).

This sequence belongs to the FPP/GGPP synthase family. Requires Mg(2+) as cofactor.

It carries out the reaction (2E)-geranyl diphosphate = (E)-beta-ocimene + diphosphate. The catalysed reaction is (2E)-geranyl diphosphate + H2O = linalool + diphosphate. It catalyses the reaction (2E,6E)-farnesyl diphosphate = (3E,6E)-alpha-farnesene + diphosphate. The enzyme catalyses (2E,6E,10E)-geranylgeranyl diphosphate = (E,E,E)-alpha-springene + diphosphate. Its function is as follows. Terpene synthase that shows monoterpene synthase activity and produces (E)-beta-ocimene as a major product and linalool as a minor product, using geranyl diphosphate (GPP) as substrate. Also shows sesquiterpene synthase activity as it is able to convert farnesyl diphosphate (FPP) into (E,E)-alpha-farnesene. Finally, TPS1 can convert geranylgeranyl diphosphate into (E,E,E)-alpha-springene. The sequence is that of IDS-like terpene synthase 1 from Melampsora larici-populina (strain 98AG31 / pathotype 3-4-7) (Poplar leaf rust fungus).